A 286-amino-acid chain; its full sequence is tRNA(Ile)-lysidine synthase (286 aa).

Residue 7–12 participates in ATP binding; sequence SGGPDS.

The protein belongs to the tRNA(Ile)-lysidine synthase family.

It is found in the cytoplasm. It carries out the reaction cytidine(34) in tRNA(Ile2) + L-lysine + ATP = lysidine(34) in tRNA(Ile2) + AMP + diphosphate + H(+). Functionally, ligates lysine onto the cytidine present at position 34 of the AUA codon-specific tRNA(Ile) that contains the anticodon CAU, in an ATP-dependent manner. Cytidine is converted to lysidine, thus changing the amino acid specificity of the tRNA from methionine to isoleucine. This is tRNA(Ile)-lysidine synthase from Mycoplasmopsis pulmonis (strain UAB CTIP) (Mycoplasma pulmonis).